We begin with the raw amino-acid sequence, 146 residues long: Phospholipase A2 PS22 (146 aa).

An N-terminal signal peptide occupies residues 1–19; it reads MYPAHLLVLLAVCVSLLGA. Residues 20–27 constitute a propeptide that is removed on maturation; that stretch reads ASVPPQPL. Disulfide bonds link Cys38-Cys98, Cys54-Cys145, Cys56-Cys72, Cys71-Cys126, Cys78-Cys119, Cys87-Cys112, and Cys105-Cys117. Ca(2+) is bound by residues Tyr55, Gly57, and Gly59. His75 is an active-site residue. Asp76 contributes to the Ca(2+) binding site. Asp120 is an active-site residue.

The protein belongs to the phospholipase A2 family. Group I subfamily. D49 sub-subfamily. Ca(2+) is required as a cofactor. Expressed by the venom gland.

It is found in the secreted. It catalyses the reaction a 1,2-diacyl-sn-glycero-3-phosphocholine + H2O = a 1-acyl-sn-glycero-3-phosphocholine + a fatty acid + H(+). Functionally, snake venom phospholipase A2 (PLA2) that inhibits collagen-induced platelet aggregation. PLA2 catalyzes the calcium-dependent hydrolysis of the 2-acyl groups in 3-sn-phosphoglycerides. In Drysdalia coronoides (White-lipped snake), this protein is Phospholipase A2 PS22.